Here is a 371-residue protein sequence, read N- to C-terminus: N-acetyldiaminopimelate deacetylase (371 aa).

Asp68 is an active-site residue. Glu127 serves as the catalytic Proton acceptor.

Belongs to the peptidase M20A family. N-acetyldiaminopimelate deacetylase subfamily.

It catalyses the reaction N-acetyl-(2S,6S)-2,6-diaminopimelate + H2O = (2S,6S)-2,6-diaminopimelate + acetate. Its pathway is amino-acid biosynthesis; L-lysine biosynthesis via DAP pathway; LL-2,6-diaminopimelate from (S)-tetrahydrodipicolinate (acetylase route): step 3/3. Functionally, catalyzes the conversion of N-acetyl-diaminopimelate to diaminopimelate and acetate. The polypeptide is N-acetyldiaminopimelate deacetylase (Oceanobacillus iheyensis (strain DSM 14371 / CIP 107618 / JCM 11309 / KCTC 3954 / HTE831)).